An 87-amino-acid polypeptide reads, in one-letter code: Lantipeptide prochlorosin 3.3 (87 aa).

Positions 1-64 (MSEEQLKAFI…DEELEAASGG (64 aa)) are excised as a propeptide. 2,3-didehydrobutyrine is present on threonine 67. The segment at residues 75–85 (TAGCYGGTKMC) is a cross-link (beta-methyllanthionine (Thr-Cys)). The beta-methyllanthionine (Cys-Thr) cross-link spans 78–82 (CYGGT).

In terms of processing, cross-links are proved in vitro, when coepressed in E.coli with the ProcM lanthionine synthetase. Post-translationally, the beta-methyllanthionine residues have a DL configuration (with 2S,3S,6R stereochemistry). Maturation of prochlorosin involves the enzymatic conversion of Thr, and Ser into dehydrated AA and the formation of thioether bonds with cysteines. This is followed by membrane translocation and cleavage of the modified precursor.

It is found in the secreted. Its function is as follows. Lanthionine-containing peptide (lantipeptide) with unknown function. Does not show antibiotic activity against Lactococcus lactis 117 and Bacillus subtilis 6633 bacteria. Organisms that produce this peptide live in oligotrophic environments at very dilute concentrations, suggesting this peptide is not secreted to influence other bacteria. The protein is Lantipeptide prochlorosin 3.3 of Prochlorococcus marinus (strain MIT 9313).